The following is a 458-amino-acid chain: Transcription factor verZ (458 aa).

Positions 117–144 form a DNA-binding region, zn(2)-C6 fungal-type; sequence CDRCQAAKVKCGHEKPSCRRCTYHKVEC. Disordered stretches follow at residues 153–256 and 435–458; these read GRPR…MQSM and MEEEDDPCSEIKLNPNRLRLEDGK. Polar residues-rich tracts occupy residues 167 to 186, 193 to 207, and 223 to 235; these read PSPQGSINGASDENSRSKSA, FTGTEPITEARQSPV, and RAEPWTPSLTTNF.

It localises to the nucleus. In terms of biological role, transcription factor; part of the gene cluster that mediates the biosynthesis of 11'-deoxyverticillin A, one of the dimeric epipolythiodioxopiperazines (ETPs) from the verticillin family that act as mycotoxins. 11'-deoxyverticillin A is required for normal conidiation. Directly binds the consensus motif 5'-(T/C)(C/A)(G/T)GN3CC(G/T)(A/G)(G/C)-3' localized in the upstream regions of the verticillin biosynthetic genes. This Clonostachys rogersoniana protein is Transcription factor verZ.